Consider the following 469-residue polypeptide: Protein apterous (469 aa).

Disordered regions lie at residues 21 to 44 (GPGAREKSPTPPVAHQGSNQCGSA) and 111 to 141 (EVSDETTSGISFKTEPFGPPSSPESTSDSKI). 2 consecutive LIM zinc-binding domains span residues 148-200 (CSGC…CKND) and 210-263 (CSRC…CRTH). The segment at residues 367 to 426 (TKRMRTSFKHHQLRTMKSYFAINHNPDAKDLKQLSQKTGLPKRVLQVWFQNARAKWRRMM) is a DNA-binding region (homeobox).

In terms of tissue distribution, expressed in PNS and CNS.

Its subcellular location is the nucleus. Functionally, required for the normal development of the wing and halter imaginal disks. This is Protein apterous (ap) from Drosophila melanogaster (Fruit fly).